We begin with the raw amino-acid sequence, 254 residues long: Probable phosphatase Shew185_1467 (254 aa).

Positions 8, 10, 16, 41, 74, 102, 132, 193, and 195 each coordinate Zn(2+).

This sequence belongs to the PHP family. Zn(2+) is required as a cofactor.

In Shewanella baltica (strain OS185), this protein is Probable phosphatase Shew185_1467.